The chain runs to 70 residues: VVLHRPGYYYPGYYYGLGMSTQYRNGDTIQNYNFQYDEDHLAGGSYRREHGTGYGNVKVGSYGLRDADGR.

The chain is Cuticle protein 16 isoform b from Limulus polyphemus (Atlantic horseshoe crab).